A 284-amino-acid polypeptide reads, in one-letter code: Dihydropteroate synthase (284 aa).

One can recognise a Pterin-binding domain in the interval 6 to 265; sequence VQVIGVLNVT…DVRASVDALK (260 aa). Residue N13 coordinates Mg(2+). Residues T53, D86, N105, D177, K213, and 253–255 contribute to the (7,8-dihydropterin-6-yl)methyl diphosphate site; that span reads RVH.

It belongs to the DHPS family. Homodimer. It depends on Mg(2+) as a cofactor.

The catalysed reaction is (7,8-dihydropterin-6-yl)methyl diphosphate + 4-aminobenzoate = 7,8-dihydropteroate + diphosphate. It functions in the pathway cofactor biosynthesis; tetrahydrofolate biosynthesis; 7,8-dihydrofolate from 2-amino-4-hydroxy-6-hydroxymethyl-7,8-dihydropteridine diphosphate and 4-aminobenzoate: step 1/2. Is potently inhibited by the sulfone dapsone and the two sulfonamides sulfamethoxazole and sulfamethoxypyridazine, with Kis in the range of 12 to 32 nM. To a lesser extent, is also inhibited by p-aminosalicylate (PAS). Its function is as follows. Catalyzes the condensation of para-aminobenzoate (pABA) with 6-hydroxymethyl-7,8-dihydropterin diphosphate (DHPt-PP) to form 7,8-dihydropteroate, the immediate precursor of folate derivatives. This chain is Dihydropteroate synthase (folP1), found in Mycobacterium leprae (strain TN).